Here is a 273-residue protein sequence, read N- to C-terminus: Putative ankyrin repeat protein RBE_0317 (273 aa).

5 ANK repeats span residues 31 to 60 (LGKEIFPIATFFDKNDIIRTLMEEKIDFYS), 93 to 123 (NGNTLLHAAIDQGKSEVVKFLTSYKNLEVNT), 127 to 157 (GGNSPLHLAIKSNNPEIVEMLLSYENINVNE), 161 to 191 (YGDTTLHKAIRSYNHKIIEMLLLREEIDVNE), and 195 to 225 (QGETPLHGAVKSNRPEIVKMLLSHKNMDTKQ).

The polypeptide is Putative ankyrin repeat protein RBE_0317 (Rickettsia bellii (strain RML369-C)).